The primary structure comprises 707 residues: MNPIVKTFQYGNHTVTLETGVMARQATAAVMASMDDTSVFVSVVGKKAAVEGQDFFPLTVNYQERTYAAGKIPGGFFKREGRPSEGETLTARLIDRPIRPLFPSAFKNEVQVIATVVSVNPEVNPDMITMIATSAALAISGLPFNGPIGAARVGFINDQFVLNPSNTELEESRLDLVVSGTKDAVLMVESEADRLSEETMLQAVVYGHDQQQVVINAINEFAAEVATPAWDWTAPVVNAELKARVADKAATRLSDAYQITEKMARYDEVGSIKNDVVASLLAEDETLDERELRGMLSSLEKHVVRGRIIAGHPRIDGREKDMVRALDVRTGVLPRTHGSSLFTRGETQALVTATLGTQRDAQIIDSIMGEKKDHFLLHYNFPPYCVGETGFVGSPKRREIGHGKLAKRGIAAVMPSVEEFPYTVRVVSEITESNGSSSMASVCGTSLALMDAGVPIKASVAGIAMGLVKEGDDFVVLSDILGDEDHLGDMDFKVAGTDDGITALQMDIKIEGITKEIMQIALNQAKGARKHILSVMDDAIGTHRDDISQFAPRIHTMKINSDKIKDVIGKGGAVIRALTEETGTTIEIEDDGTIKIAATEGAAAKEAIRRIEEITADVEVGRIYTGKVMRIVDFGAFVSVIGAKEGLVHISQIAQERVEKVSDHLQMGQEVQVKVLEIDRQGRIRLSMKEAVADQNPATVQDEQPQG.

Mg(2+)-binding residues include aspartate 485 and aspartate 491. The KH domain occupies 552-611 (PRIHTMKINSDKIKDVIGKGGAVIRALTEETGTTIEIEDDGTIKIAATEGAAAKEAIRRI). The S1 motif domain maps to 621 to 689 (GRIYTGKVMR…RQGRIRLSMK (69 aa)).

This sequence belongs to the polyribonucleotide nucleotidyltransferase family. In terms of assembly, component of the RNA degradosome, which is a multiprotein complex involved in RNA processing and mRNA degradation. It depends on Mg(2+) as a cofactor.

The protein localises to the cytoplasm. It catalyses the reaction RNA(n+1) + phosphate = RNA(n) + a ribonucleoside 5'-diphosphate. Functionally, involved in mRNA degradation. Catalyzes the phosphorolysis of single-stranded polyribonucleotides processively in the 3'- to 5'-direction. The sequence is that of Polyribonucleotide nucleotidyltransferase from Photobacterium profundum (strain SS9).